The following is a 647-amino-acid chain: S-adenosyl-L-methionine-dependent tRNA 4-demethylwyosine synthase (647 aa).

The 149-residue stretch at 50–198 (GKIFFISQTG…AFQDWCDGVI (149 aa)) folds into the Flavodoxin-like domain. FMN is bound by residues 56–60 (SQTGT) and 142–174 (VFGV…LEMI). Positions 316–559 (YGIESHRCME…LSLKSNGEYE (244 aa)) constitute a Radical SAM core domain. Residues C332, C336, and C339 each coordinate [4Fe-4S] cluster.

It belongs to the TYW1 family. The cofactor is [4Fe-4S] cluster.

It carries out the reaction N(1)-methylguanosine(37) in tRNA(Phe) + pyruvate + S-adenosyl-L-methionine = 4-demethylwyosine(37) in tRNA(Phe) + 5'-deoxyadenosine + L-methionine + CO2 + H2O. It functions in the pathway tRNA modification; wybutosine-tRNA(Phe) biosynthesis. Probable component of the wybutosine biosynthesis pathway. Wybutosine is a hyper modified guanosine with a tricyclic base found at the 3'-position adjacent to the anticodon of eukaryotic phenylalanine tRNA. Catalyzes the condensation of N-methylguanine with 2 carbon atoms from pyruvate to form the tricyclic 4-demethylwyosine, an intermediate in wybutosine biosynthesis. In Arabidopsis thaliana (Mouse-ear cress), this protein is S-adenosyl-L-methionine-dependent tRNA 4-demethylwyosine synthase (TYW1).